Consider the following 391-residue polypeptide: Chalcone synthase 2 (391 aa).

Residue cysteine 164 is part of the active site.

The protein belongs to the thiolase-like superfamily. Chalcone/stilbene synthases family.

The catalysed reaction is (E)-4-coumaroyl-CoA + 3 malonyl-CoA + 3 H(+) = 2',4,4',6'-tetrahydroxychalcone + 3 CO2 + 4 CoA. Its pathway is secondary metabolite biosynthesis; flavonoid biosynthesis. The primary product of this enzyme is 4,2',4',6'-tetrahydroxychalcone (also termed naringenin-chalcone or chalcone) which can under specific conditions spontaneously isomerize into naringenin. The sequence is that of Chalcone synthase 2 (CHS2) from Citrus sinensis (Sweet orange).